The sequence spans 97 residues: Late transcription unit B protein (97 aa).

A disordered region spans residues 24 to 45 (SIEGETKKEHKHHYSTASKEKE).

The sequence is that of Late transcription unit B protein (ltuB) from Chlamydia trachomatis serovar D (strain ATCC VR-885 / DSM 19411 / UW-3/Cx).